The sequence spans 177 residues: Adenine phosphoribosyltransferase (177 aa).

It belongs to the purine/pyrimidine phosphoribosyltransferase family. As to quaternary structure, homodimer.

The protein resides in the cytoplasm. The enzyme catalyses AMP + diphosphate = 5-phospho-alpha-D-ribose 1-diphosphate + adenine. It participates in purine metabolism; AMP biosynthesis via salvage pathway; AMP from adenine: step 1/1. Its function is as follows. Catalyzes a salvage reaction resulting in the formation of AMP, that is energically less costly than de novo synthesis. In Rhodococcus jostii (strain RHA1), this protein is Adenine phosphoribosyltransferase.